The chain runs to 347 residues: Gibberellin 3-beta-dioxygenase 2 (347 aa).

Residues 197-301 form the Fe2OG dioxygenase domain; it reads DFQGTQAVIQ…RFSMAYLWGP (105 aa). The Fe cation site is built by His225, Asp227, and His282. The active site involves Arg292. 2-oxoglutarate is bound at residue Arg292.

This sequence belongs to the iron/ascorbate-dependent oxidoreductase family. GA3OX subfamily. L-ascorbate is required as a cofactor. Requires Fe(2+) as cofactor. In terms of tissue distribution, highly expressed in seedlings but also expressed in roots, leaves, stems, flowers, siliques and seeds. Detected predominantly in the hypocotyl and roots of young seedlings and in the petioles and vasculature of leaves. Not expressed in the shoot apical meristem, but found in the elongation zone, the quiescent center cells and the columella cells of the root tips. Found in the cortex and the endodermis of the embryo axis in germinating seeds.

The catalysed reaction is gibberellin A20 + 2-oxoglutarate + O2 = gibberellin A1 + succinate + CO2. The protein operates within plant hormone biosynthesis; gibberellin biosynthesis. In terms of biological role, converts the inactive gibberellin (GA) precursors GA9 and GA20 in the bioactives gibberellins GA4 and GA1. Involved in the production of bioactive GA for vegetative growth and development. The polypeptide is Gibberellin 3-beta-dioxygenase 2 (Arabidopsis thaliana (Mouse-ear cress)).